The sequence spans 1182 residues: Receptor-type guanylate cyclase gcy-19 (1182 aa).

Residues 1–24 (MEYLLFLLLFAGFLTFLPRFLIYA) form the signal peptide. Residues 25–507 (QITSSTTTTT…PQSFVDQYGA (483 aa)) lie on the Extracellular side of the membrane. 4 N-linked (GlcNAc...) asparagine glycosylation sites follow: Asn-91, Asn-369, Asn-430, and Asn-453. Residues 508 to 528 (LVFAIGGVLIFAMLFVITCFF) form a helical membrane-spanning segment. Over 529 to 1182 (YVMRQKRLER…FRRQETLALI (654 aa)) the chain is Cytoplasmic. The Protein kinase domain maps to 562 to 849 (RMSKRSLQSG…KGNLMDHVFN (288 aa)). The 131-residue stretch at 907-1037 (TVFFSDVVKF…DTVNTASRME (131 aa)) folds into the Guanylate cyclase domain. Residues 1094–1164 (VSSNSGYQSD…EAKARDIHNE (71 aa)) are disordered. Residues 1142–1152 (SPTLSKRSVSP) show a composition bias toward low complexity.

It belongs to the adenylyl cyclase class-4/guanylyl cyclase family. Expressed in IL2 sensory neurons.

The protein localises to the cell membrane. The catalysed reaction is GTP = 3',5'-cyclic GMP + diphosphate. In terms of biological role, guanylate cyclase involved in the production of the second messenger cGMP. This is Receptor-type guanylate cyclase gcy-19 from Caenorhabditis elegans.